We begin with the raw amino-acid sequence, 293 residues long: Cytidine deaminase (293 aa).

CMP/dCMP-type deaminase domains are found at residues 47-166 (EDRA…FGPA) and 186-293 (ESED…YQAV). 88–90 (NME) is a binding site for substrate. Zn(2+) is bound at residue His-101. Glu-103 acts as the Proton donor in catalysis. Residues Cys-128 and Cys-131 each contribute to the Zn(2+) site.

The protein belongs to the cytidine and deoxycytidylate deaminase family. Homodimer. Zn(2+) serves as cofactor.

The catalysed reaction is cytidine + H2O + H(+) = uridine + NH4(+). It catalyses the reaction 2'-deoxycytidine + H2O + H(+) = 2'-deoxyuridine + NH4(+). This enzyme scavenges exogenous and endogenous cytidine and 2'-deoxycytidine for UMP synthesis. This Aeromonas salmonicida (strain A449) protein is Cytidine deaminase.